The chain runs to 286 residues: Cytochrome bo(3) ubiquinol oxidase subunit 2 (286 aa).

The signal sequence occupies residues 1–24 (MQFIKYKSYILKFLLVSCIFCING). Residue Cys25 is the site of N-palmitoyl cysteine attachment. The S-diacylglycerol cysteine moiety is linked to residue Cys25. Topologically, residues 25–44 (CDCTILCPNGLIAQEQRFVL) are extracellular. A helical transmembrane segment spans residues 45 to 67 (FVSFFTMLLIIIPVIFMTIFFVL). The Cytoplasmic portion of the chain corresponds to 68 to 85 (RYRESNFSKTYDPKWSHS). Residues 86-108 (NIIELLIWGIPIIIIVFLSIFSW) form a helical membrane-spanning segment. The Extracellular segment spans residues 109–286 (KSVHDLDPKK…VIANVLKISL (178 aa)).

This sequence belongs to the cytochrome c oxidase subunit 2 family. As to quaternary structure, heterooctamer of two A chains, two B chains, two C chains and two D chains.

It localises to the cell membrane. In terms of biological role, cytochrome bo(3) ubiquinol terminal oxidase is the component of the aerobic respiratory chain of E.coli that predominates when cells are grown at high aeration. Has proton pump activity across the membrane in addition to electron transfer, pumping 2 protons/electron. This chain is Cytochrome bo(3) ubiquinol oxidase subunit 2 (cyoA), found in Buchnera aphidicola subsp. Baizongia pistaciae (strain Bp).